The chain runs to 867 residues: Bifunctional isopimaradiene synthase, chloroplastic (867 aa).

A chloroplast-targeting transit peptide spans 1 to 68 (MALLSSSLSS…VGEGTTSLPY (68 aa)). A substrate-binding site is contributed by K267. D400 and D402 together coordinate Mg(2+). Positions 400–403 (DIDD) match the DXDD motif motif. K487 lines the substrate pocket. Residues D619, D623, N763, T767, and E771 each coordinate Mg(2+). The DDXXD motif signature appears at 619 to 623 (DDLYD).

It belongs to the terpene synthase family. Tpsd subfamily. Mg(2+) serves as cofactor.

It localises to the plastid. It is found in the chloroplast. It catalyses the reaction (2E,6E,10E)-geranylgeranyl diphosphate = (+)-copalyl diphosphate. It carries out the reaction (+)-copalyl diphosphate = isopimara-7,15-diene + diphosphate. The protein operates within terpene metabolism; oleoresin biosynthesis. Involved in defensive oleoresin formation in conifers in response to insect attack or other injury. Involved in diterpene (C20) olefins biosynthesis. Bifunctional enzyme that catalyzes two sequential cyclizations of geranylgeranyl diphosphate (GGPP) to isopimara-7,15-diene. This chain is Bifunctional isopimaradiene synthase, chloroplastic (TPS-ISO), found in Picea abies (Norway spruce).